The chain runs to 753 residues: Pumilio homolog 23 (753 aa).

A disordered region spans residues 1 to 84; it reads MVSVGSKSLP…SEFEHQNQFV (84 aa). 3 stretches are compositionally biased toward basic and acidic residues: residues 23–38, 47–57, and 73–84; these read MGERGKSSNNHSERNK, GNRGFDVDSSK, and KHSEFEHQNQFV. Pumilio repeat units lie at residues 123–158, 159–198, 206–244, 284–325, 345–380, 381–418, 526–563, and 564–599; these read ETRGREYEIATDYIISHVLQTLLEGCELDQLCSFIR, NSASVFPAIAMDRSGSHVAESALKSLATHLENPDAYSVIE, KVIVDNPLDMMCNCYGSHVLRRLLCLCKGVSLDSPELYG, GLLS…EIIP, NVAKEILESMKDNSFSHLVEVILEVAPESLYNEMFN, KVFKNSLFELSVDRCANFVIQALISHARDQEQMGIMWE, SMKAEYITETAKDSSGARVIEAFLASDAATKQKRRLII, and KLRGHFGELSLHTSGSFTVEKCFDACNLTLREAIAS. The region spanning 322-675 is the PUM-HD domain; it reads EIIPLILRCN…DASEDAAQEI (354 aa). Composition is skewed to basic and acidic residues over residues 677-688, 699-712, and 719-728; these read VKNTRKEIDHHP, HAKDKDEPFAGEKR, and KTSEATDKPK. The segment at 677-753 is disordered; it reads VKNTRKEIDH…KNRHSNKMRI (77 aa). The span at 744-753 shows a compositional bias: basic residues; the sequence is KNRHSNKMRI.

The protein resides in the nucleus. It is found in the nucleolus. Functionally, sequence-specific RNA-binding protein that regulates translation and mRNA stability by binding the 3'-UTR of target mRNAs. In Arabidopsis thaliana (Mouse-ear cress), this protein is Pumilio homolog 23 (APUM23).